The sequence spans 293 residues: 4-hydroxy-tetrahydrodipicolinate synthase (293 aa).

Thr46 contacts pyruvate. Catalysis depends on Tyr133, which acts as the Proton donor/acceptor. Residue Lys161 is the Schiff-base intermediate with substrate of the active site. Residue Val202 participates in pyruvate binding.

This sequence belongs to the DapA family. As to quaternary structure, homotetramer; dimer of dimers.

The protein localises to the cytoplasm. It catalyses the reaction L-aspartate 4-semialdehyde + pyruvate = (2S,4S)-4-hydroxy-2,3,4,5-tetrahydrodipicolinate + H2O + H(+). It functions in the pathway amino-acid biosynthesis; L-lysine biosynthesis via DAP pathway; (S)-tetrahydrodipicolinate from L-aspartate: step 3/4. Catalyzes the condensation of (S)-aspartate-beta-semialdehyde [(S)-ASA] and pyruvate to 4-hydroxy-tetrahydrodipicolinate (HTPA). This chain is 4-hydroxy-tetrahydrodipicolinate synthase, found in Wolbachia pipientis subsp. Culex pipiens (strain wPip).